Consider the following 354-residue polypeptide: MKYIDEAIIHVIAGKGGDGVAAFRREKYIPKGGPSGGDGGRGGSIYAMADRNINTLVDYRFARIHRAKNGENGQGSDRYGKSAHDIVLRMPVGTVITNEATGERVADLVQHDQKILLAKGGTGGLGNLHFKSSTNRTPRQFTLGEPGEEADLKLELKVLADVGLLGMPNAGKSTLIRAISAARPKVADYPFTTMHPALGVVRVDQNRSFVMADIPGLIEGAAEGAGLGHRFLKHLARTRLLLHVVDIAPLDEAIDPVYEAKAILEELRKYDEALYRKPRWLVLNKVDLLPENEREKICKKFIRSLRWKDKNFAISAMTGDGCKELTYAIMEFLERESMDENQERATFAEPDTSD.

Residues 1–159 form the Obg domain; sequence MKYIDEAIIH…ADLKLELKVL (159 aa). One can recognise an OBG-type G domain in the interval 160–334; sequence ADVGLLGMPN…LTYAIMEFLE (175 aa). Residues 166 to 173, 191 to 195, 213 to 216, 284 to 287, and 315 to 317 contribute to the GTP site; these read GMPNAGKS, FTTMH, DIPG, NKVD, and SAM. Mg(2+)-binding residues include Ser-173 and Thr-193.

It belongs to the TRAFAC class OBG-HflX-like GTPase superfamily. OBG GTPase family. As to quaternary structure, monomer. Mg(2+) is required as a cofactor.

Its subcellular location is the cytoplasm. Functionally, an essential GTPase which binds GTP, GDP and possibly (p)ppGpp with moderate affinity, with high nucleotide exchange rates and a fairly low GTP hydrolysis rate. Plays a role in control of the cell cycle, stress response, ribosome biogenesis and in those bacteria that undergo differentiation, in morphogenesis control. The protein is GTPase Obg of Nitrosospira multiformis (strain ATCC 25196 / NCIMB 11849 / C 71).